The chain runs to 175 residues: METNCPNILYLSGITIEECLQSKKTSTDALNTNGDEAEVEKKLPSVFTSVSKWVTYSSFKCWTCHLYFKTVPKFVPTYMRENERGEIEMGVLGNFCSFSCAASYIDLHYTEPKRWEARELLNMLYRFFTSQWISYIRPALSYTMRKEYGGKLSEEAFISELHTLEESISSKDIFI.

Belongs to the asfivirus B175L family.

This is an uncharacterized protein from Ornithodoros (relapsing fever ticks).